Reading from the N-terminus, the 81-residue chain is Small ribosomal subunit protein bS16 (81 aa).

Belongs to the bacterial ribosomal protein bS16 family.

In Treponema denticola (strain ATCC 35405 / DSM 14222 / CIP 103919 / JCM 8153 / KCTC 15104), this protein is Small ribosomal subunit protein bS16.